Reading from the N-terminus, the 196-residue chain is uncharacterized protein (196 aa).

Positions Met-1–Pro-10 are enriched in pro residues. Disordered regions lie at residues Met-1–Gly-118 and Thr-176–Gly-196. Residues Pro-25 to Ser-45 are compositionally biased toward low complexity. The span at Leu-54–Asn-69 shows a compositional bias: polar residues.

This is an uncharacterized protein from Homo sapiens (Human).